The sequence spans 1119 residues: Period circadian protein homolog 3 (1119 aa).

The interval 1-48 (MDPCGNPAVPGGDCPQTRGPGLQGSSGQEGPLQGICVDSSHSEHEDRN) is disordered. The Nuclear export signal 1 signature appears at 54-63 (LIMVVQEMKK). 2 PAS domains span residues 120 to 187 (LASE…PTQL) and 259 to 325 (YEAP…KVLK). Positions 334–377 (HSPIRFCTQNGDYVILDSSWSSFVNPWSRKVSFIIGRHKVRTSP) constitute a PAC domain. The Nuclear export signal 3 motif lies at 400 to 409 (LQEQIHRLLL). The segment covering 419-428 (GYGSLGSSGS) has biased composition (low complexity). Disordered stretches follow at residues 419-449 (GYGS…VEEA), 483-530 (VKPV…SSSY), 718-744 (HSRC…SSSS), and 878-910 (LEPT…SRSS). Polar residues-rich tracts occupy residues 429–442 (QEQH…SESS) and 491–515 (TEPQ…STDT). Residues 551–750 (LKRKCISCTN…SSSSAHLCPH (200 aa)) form a CSNK1E binding domain region. Positions 720–739 (RCAGSERRKHKRKKLPTPVD) match the Nuclear localization signal motif. The span at 885 to 903 (HGPRRVEENWETHSEEEHP) shows a compositional bias: basic and acidic residues. Residue Ser907 is modified to Phosphoserine. The Nuclear export signal 2 motif lies at 913–920 (LQLNLLQE). The disordered stretch occupies residues 947 to 1011 (GNSGSRSPPC…QDTHRDRAFS (65 aa)). Over residues 970–988 (SPSAAASGSSASSVHGSGS) the composition is skewed to low complexity. Residues 989–1001 (DYTSEVSENGQRS) are compositionally biased toward polar residues. The CRY binding domain stretch occupies residues 1037 to 1119 (ERGRDTVLRE…VQQKTPVEQL (83 aa)).

Homodimer. Component of the circadian core oscillator, which includes the CRY proteins, CLOCK or NPAS2, BMAL1 or BMAL2, CSNK1D and/or CSNK1E, TIMELESS and the PER proteins. Interacts directly with PER1, PER2, CRY1, CRY2, and TIMELESS; interaction with CRY1 and CRY2 is weak and not rhythmic. Interacts with FBXW11 and BTRC. In terms of processing, phosphorylation by CSNK1E is weak and appears to require association with PER1 and translocation to the nucleus. Post-translationally, ubiquitinated.

It is found in the cytoplasm. The protein resides in the nucleus. Originally described as a core component of the circadian clock. The circadian clock, an internal time-keeping system, regulates various physiological processes through the generation of approximately 24 hour circadian rhythms in gene expression, which are translated into rhythms in metabolism and behavior. It is derived from the Latin roots 'circa' (about) and 'diem' (day) and acts as an important regulator of a wide array of physiological functions including metabolism, sleep, body temperature, blood pressure, endocrine, immune, cardiovascular, and renal function. Consists of two major components: the central clock, residing in the suprachiasmatic nucleus (SCN) of the brain, and the peripheral clocks that are present in nearly every tissue and organ system. Both the central and peripheral clocks can be reset by environmental cues, also known as Zeitgebers (German for 'timegivers'). The predominant Zeitgeber for the central clock is light, which is sensed by retina and signals directly to the SCN. The central clock entrains the peripheral clocks through neuronal and hormonal signals, body temperature and feeding-related cues, aligning all clocks with the external light/dark cycle. Circadian rhythms allow an organism to achieve temporal homeostasis with its environment at the molecular level by regulating gene expression to create a peak of protein expression once every 24 hours to control when a particular physiological process is most active with respect to the solar day. Transcription and translation of core clock components (CLOCK, NPAS2, BMAL1, BMAL2, PER1, PER2, PER3, CRY1 and CRY2) plays a critical role in rhythm generation, whereas delays imposed by post-translational modifications (PTMs) are important for determining the period (tau) of the rhythms (tau refers to the period of a rhythm and is the length, in time, of one complete cycle). A diurnal rhythm is synchronized with the day/night cycle, while the ultradian and infradian rhythms have a period shorter and longer than 24 hours, respectively. Disruptions in the circadian rhythms contribute to the pathology of cardiovascular diseases, cancer, metabolic syndromes and aging. A transcription/translation feedback loop (TTFL) forms the core of the molecular circadian clock mechanism. Transcription factors, CLOCK or NPAS2 and BMAL1 or BMAL2, form the positive limb of the feedback loop, act in the form of a heterodimer and activate the transcription of core clock genes and clock-controlled genes (involved in key metabolic processes), harboring E-box elements (5'-CACGTG-3') within their promoters. The core clock genes: PER1/2/3 and CRY1/2 which are transcriptional repressors form the negative limb of the feedback loop and interact with the CLOCK|NPAS2-BMAL1|BMAL2 heterodimer inhibiting its activity and thereby negatively regulating their own expression. This heterodimer also activates nuclear receptors NR1D1, NR1D2, RORA, RORB and RORG, which form a second feedback loop and which activate and repress BMAL1 transcription, respectively. Has a redundant role with the other PER proteins PER1 and PER2 and is not essential for the circadian rhythms maintenance. In contrast, plays an important role in sleep-wake timing and sleep homeostasis probably through the transcriptional regulation of sleep homeostasis-related genes, without influencing circadian parameters. Can bind heme. The polypeptide is Period circadian protein homolog 3 (Per3) (Rattus norvegicus (Rat)).